A 743-amino-acid chain; its full sequence is tRNA(Met) cytidine acetyltransferase TmcA (743 aa).

ATP-binding positions include glutamine 216, 241 to 250, and arginine 390; that span reads GRGKSASIGL. One can recognise an N-acetyltransferase domain in the interval 420 to 604; it reads LKIEDVSQEE…YSVIVIRALS (185 aa). Residues 531–533 and 538–544 contribute to the acetyl-CoA site; these read IAV and QGKGIGS.

Belongs to the RNA cytidine acetyltransferase family. TmcA subfamily.

It is found in the cytoplasm. The catalysed reaction is cytidine(34) in elongator tRNA(Met) + acetyl-CoA + ATP + H2O = N(4)-acetylcytidine(34) in elongator tRNA(Met) + ADP + phosphate + CoA + H(+). Its function is as follows. Catalyzes the formation of N(4)-acetylcytidine (ac(4)C) at the wobble position of tRNA(Met), by using acetyl-CoA as an acetyl donor and ATP (or GTP). The chain is tRNA(Met) cytidine acetyltransferase TmcA from Saccharolobus islandicus (strain Y.G.57.14 / Yellowstone #1) (Sulfolobus islandicus).